We begin with the raw amino-acid sequence, 902 residues long: MLKIITRQLFARLNRHLPYRLVHRDPLPGAQTAVNATIPPSLSERCLKVAAMEQETLWRVFDTHPEGLNAAEVTRAREKHGENRLPAQKPSPWWVHLWVCYRNPFNILLTILGGISYATEDLFAAGVIALMVGISTLLNFVQEARSTKAADALKAMVSNTATVLRVINENGENAWLELPIDQLVPGDIIKLAAGDMIPADLRIIQARDLFVAQASLTGESLPVEKVAATREPRQNNPLECDTLCFMGTNVVSGTAQAVVMATGAGTWFGQLAGRVSEQDNEQNAFQKGISRVSMLLIRFMLVMAPVVLIINGYTKGDWWEAALFALSVAVGLTPEMLPMIVTSTLARGAVKLSKQKVIVKHLDAIQNFGAMDILCTDKTGTLTQDKIVLENHTDISGKPSEHVLHCAWLNSHYQTGLKNLLDTAVLEGVDETAARQLSGRWQKIDEIPFDFERRRMSVVVAEDSNVHQLVCKGALQEILNVCTQVRHNGDIVPLDDNMLRRVKRVTDTLNRQGLRVVAVATKYLPAREGDYQRIDESDLILEGYIAFLDPPKETTAPALKALKASGITVKILTGDSELVAAKVCHEVGLDAGDVIIGSDIEGLSDDALAALAARTTLFARLTPMHKERIVTLLKREGHVVGFMGDGINDAPALRAADIGISVDGAVDIAREAADIILLEKSLMVLEEGVIEGRRTFSNMLKYIKMTASSNFGNVFSVLVASAFLPFLPMLPLHLLIQNLLYDVSQVAIPFDNVDEEQIQKPQRWNPADLGRFMVFFGPISSIFDILTFCLMWWVFHANTPETQTLFQSGWFVVGLLSQTLIVHMIRTRRLPFIQSRAAWPLMAMTLLVMVVGVSLPFSPLASYLQLQALPLSYFPWLIAILVGYMTLTQLVKGFYSRRYGWQ.

Topologically, residues 1–98 are cytoplasmic; sequence MLKIITRQLF…KPSPWWVHLW (98 aa). The chain crosses the membrane as a helical span at residues 99 to 119; sequence VCYRNPFNILLTILGGISYAT. A topological domain (extracellular) is located at residue Glu120. Residues 121–141 form a helical membrane-spanning segment; that stretch reads DLFAAGVIALMVGISTLLNFV. Over 142-291 the chain is Cytoplasmic; the sequence is QEARSTKAAD…QNAFQKGISR (150 aa). A helical transmembrane segment spans residues 292-312; sequence VSMLLIRFMLVMAPVVLIING. Over 313–321 the chain is Extracellular; that stretch reads YTKGDWWEA. A helical membrane pass occupies residues 322 to 339; it reads ALFALSVAVGLTPEMLPM. Glu335 contacts Mg(2+). Topologically, residues 340–699 are cytoplasmic; the sequence is IVTSTLARGA…IEGRRTFSNM (360 aa). Catalysis depends on Asp377, which acts as the 4-aspartylphosphate intermediate. Residues Asp645, Asp649, and Asn713 each contribute to the Mg(2+) site. Residues 700 to 719 traverse the membrane as a helical segment; it reads LKYIKMTASSNFGNVFSVLV. The Extracellular segment spans residues 720-728; sequence ASAFLPFLP. Residues 729–748 traverse the membrane as a helical segment; sequence MLPLHLLIQNLLYDVSQVAI. Asn738 and Asp742 together coordinate Mg(2+). Over 749–770 the chain is Cytoplasmic; it reads PFDNVDEEQIQKPQRWNPADLG. Residues 771–794 form a helical membrane-spanning segment; sequence RFMVFFGPISSIFDILTFCLMWWV. Residues 795–803 lie on the Extracellular side of the membrane; the sequence is FHANTPETQ. A helical membrane pass occupies residues 804-822; sequence TLFQSGWFVVGLLSQTLIV. The Cytoplasmic segment spans residues 823–835; sequence HMIRTRRLPFIQS. The chain crosses the membrane as a helical span at residues 836-855; it reads RAAWPLMAMTLLVMVVGVSL. The Extracellular portion of the chain corresponds to 856 to 870; sequence PFSPLASYLQLQALP. A helical membrane pass occupies residues 871 to 890; the sequence is LSYFPWLIAILVGYMTLTQL. Residues 891 to 902 lie on the Cytoplasmic side of the membrane; the sequence is VKGFYSRRYGWQ.

This sequence belongs to the cation transport ATPase (P-type) (TC 3.A.3) family. Type IIIB subfamily.

It localises to the cell inner membrane. It catalyses the reaction Mg(2+)(out) + ATP + H2O = Mg(2+)(in) + ADP + phosphate + H(+). Its function is as follows. Mediates magnesium influx to the cytosol. This Salmonella typhimurium (strain 14028s / SGSC 2262) protein is Magnesium-transporting ATPase, P-type 1 (mgtA).